The primary structure comprises 304 residues: MHFNNKNKSLDCLNTKIWPSPAKINLFLSVTGIRKDGYHFIQTLFQFLNYGDYLIFNTTSDKKIKLINKIHGIRNENNLIIRAAKSLKDFMWKNKNHDTPGVKIFIKKYIPIGGGLGGGSSNAATTLIALNEHWKCKLSLNTLADLGLQIGIDIPVFIYGKSAFAEGIGEKLSLFQPKEKFYLIVIPPIKISTKLIFNKFILNKKSYLKSCNQYLKKPLKNDFEPMIRKNFIIIDNLINYLSKFSNFRLTGTGSCIFSEFDSECKAKEILYKLPNKIKGFVSKGTNISYLKEILKIRSNFNVLS.

Residue Lys-23 is part of the active site. 111 to 121 (PIGGGLGGGSS) is an ATP binding site. The active site involves Asp-153.

It belongs to the GHMP kinase family. IspE subfamily. As to quaternary structure, homodimer.

The catalysed reaction is 4-CDP-2-C-methyl-D-erythritol + ATP = 4-CDP-2-C-methyl-D-erythritol 2-phosphate + ADP + H(+). It participates in isoprenoid biosynthesis; isopentenyl diphosphate biosynthesis via DXP pathway; isopentenyl diphosphate from 1-deoxy-D-xylulose 5-phosphate: step 3/6. Functionally, catalyzes the phosphorylation of the position 2 hydroxy group of 4-diphosphocytidyl-2C-methyl-D-erythritol. The chain is 4-diphosphocytidyl-2-C-methyl-D-erythritol kinase from Wigglesworthia glossinidia brevipalpis.